A 485-amino-acid polypeptide reads, in one-letter code: Ribosomal protein S6 kinase beta-2 (485 aa).

Residues 1–26 (MAAVFDLDLETEEGSEGEGEPEFSPA) form a disordered region. Over residues 7–21 (LDLETEEGSEGEGEP) the composition is skewed to acidic residues. A Phosphoserine modification is found at serine 15. The region spanning 67–328 (FELLSVLGKG…AADVQRHPFF (262 aa)) is the Protein kinase domain. Residues 73–81 (LGKGGYGKV) and lysine 99 contribute to the ATP site. Aspartate 194 acts as the Proton acceptor in catalysis. Residues 329 to 399 (RHINWDDLLA…VAPSVLDSIK (71 aa)) form the AGC-kinase C-terminal domain. The segment at 407-485 (KLRSPRRLNS…SKKGRGRSGR (79 aa)) is disordered. Serine 417 is subject to Phosphoserine. Threonine 420 is modified (phosphothreonine). Serine 423 is modified (phosphoserine). A compositionally biased stretch (pro residues) spans 436–469 (SPGPPEPMEPSLPPLLPSPPSPPPTSTAPLPIRP). A Nuclear localization signal motif is present at residues 474 to 480 (KKSKKGR). Over residues 474 to 485 (KKSKKGRGRSGR) the composition is skewed to basic residues. Position 476 is a phosphoserine; by PKC (serine 476).

This sequence belongs to the protein kinase superfamily. AGC Ser/Thr protein kinase family. S6 kinase subfamily. Post-translationally, phosphorylated and activated by MTOR. Phosphorylation by PKC within the NLS in response to mitogenic stimuli causes cytoplasmic retention.

It is found in the cytoplasm. It localises to the nucleus. It catalyses the reaction L-seryl-[protein] + ATP = O-phospho-L-seryl-[protein] + ADP + H(+). The catalysed reaction is L-threonyl-[protein] + ATP = O-phospho-L-threonyl-[protein] + ADP + H(+). Phosphorylates specifically ribosomal protein S6. Seems to act downstream of mTOR signaling in response to growth factors and nutrients to promote cell proliferation, cell growth and cell cycle progression in an alternative pathway regulated by MEAK7. This is Ribosomal protein S6 kinase beta-2 (Rps6kb2) from Mus musculus (Mouse).